The sequence spans 645 residues: Protein hrpC2 (645 aa).

Transmembrane regions (helical) follow at residues 18 to 34 (VAIA…MILP), 43 to 59 (LLGI…MVTM), 108 to 124 (LVVG…FLII), 201 to 217 (IAGL…GIVV), 243 to 259 (VSQI…GVMI), 285 to 301 (ARAL…FAFV), and 308 to 324 (LFLL…YTIW). Residues 334 to 354 (DQRKLPSASRKGAKGEAPHIR) are disordered.

The protein belongs to the FHIPEP (flagella/HR/invasion proteins export pore) family.

It is found in the cell inner membrane. Involved in the secretion of a proteinaceous elicitor of the hypersensitivity response in plants. This is Protein hrpC2 (hrpC2) from Xanthomonas euvesicatoria.